Consider the following 92-residue polypeptide: Small ribosomal subunit protein uS19 (92 aa).

Belongs to the universal ribosomal protein uS19 family.

In terms of biological role, protein S19 forms a complex with S13 that binds strongly to the 16S ribosomal RNA. This Bradyrhizobium diazoefficiens (strain JCM 10833 / BCRC 13528 / IAM 13628 / NBRC 14792 / USDA 110) protein is Small ribosomal subunit protein uS19.